Consider the following 312-residue polypeptide: Taste receptor type 2 member 103 (312 aa).

The Extracellular segment spans residues 1 to 16 (MVVTMRAALRLMLIST). A helical transmembrane segment spans residues 17–37 (VSLELIIGILANVFIALVNII). At 38–65 (DWIKRGKISAVDKIYMGLAISRTAFVLS) the chain is on the cytoplasmic side. The helical transmembrane segment at 66 to 86 (VITGFLIAFLDPASLGIGIMI) threads the bilayer. The Extracellular segment spans residues 87–92 (RLLTMS). Residues 93–113 (WTVTNHFSVWFATCLSIFYFL) form a helical membrane-spanning segment. The Cytoplasmic segment spans residues 114–133 (KITNFSNTVFLALKWKVKKV). A helical transmembrane segment spans residues 134 to 154 (VSVTLVVSLIILFINVIVIHI). The Extracellular portion of the chain corresponds to 155–184 (YTDRFQVNMVQKCGANNTLRAYGLFLSIST). An N-linked (GlcNAc...) asparagine glycan is attached at N170. A helical transmembrane segment spans residues 185–205 (VFTFIPFTASLTMFLLLIFSL). Residues 206–229 (WRHLKTMHHNATGSRDVSTVAHIK) are Cytoplasmic-facing. Residues 230–250 (GLQTVVAFLLLYTVFAMSLFS) traverse the membrane as a helical segment. Residues 251–264 (QSLSIDAQHTNLLS) are Extracellular-facing. A helical membrane pass occupies residues 265-285 (HFLRCIGVAFPSGHSCALILG). At 286-312 (NNKLRQASLSVIFWLRCKYKHTENQGP) the chain is on the cytoplasmic side.

This sequence belongs to the G-protein coupled receptor T2R family.

The protein localises to the membrane. In terms of biological role, gustducin-coupled receptor implicated in the perception of bitter compounds in the oral cavity and the gastrointestinal tract. Signals through PLCB2 and the calcium-regulated cation channel TRPM5. This Rattus norvegicus (Rat) protein is Taste receptor type 2 member 103.